The sequence spans 102 residues: NADH-quinone oxidoreductase subunit K 1 (102 aa).

A run of 3 helical transmembrane segments spans residues 6–26 (LNAY…GVLV), 31–51 (LAIL…FVAF), and 65–85 (FLVI…TVLL).

This sequence belongs to the complex I subunit 4L family. As to quaternary structure, NDH-1 is composed of 14 different subunits. Subunits NuoA, H, J, K, L, M, N constitute the membrane sector of the complex.

The protein resides in the cell membrane. It carries out the reaction a quinone + NADH + 5 H(+)(in) = a quinol + NAD(+) + 4 H(+)(out). In terms of biological role, NDH-1 shuttles electrons from NADH, via FMN and iron-sulfur (Fe-S) centers, to quinones in the respiratory chain. The immediate electron acceptor for the enzyme in this species is believed to be a menaquinone. Couples the redox reaction to proton translocation (for every two electrons transferred, four hydrogen ions are translocated across the cytoplasmic membrane), and thus conserves the redox energy in a proton gradient. The protein is NADH-quinone oxidoreductase subunit K 1 of Symbiobacterium thermophilum (strain DSM 24528 / JCM 14929 / IAM 14863 / T).